Here is a 449-residue protein sequence, read N- to C-terminus: Clusterin (449 aa).

Positions 1 to 22 are cleaved as a signal peptide; that stretch reads MMKTLLLFVGLLLTWESGQVLG. The Nuclear localization signal motif lies at 78 to 81; it reads KKKK. A glycan (N-linked (GlcNAc...) (complex) asparagine) is linked at N86. 5 cysteine pairs are disulfide-bonded: C102–C313, C113–C305, C116–C302, C121–C295, and C129–C285. A glycan (N-linked (GlcNAc...) asparagine) is linked at N103. S133 bears the Phosphoserine mark. N-linked (GlcNAc...) asparagine glycosylation is found at N145, N291, and N354. N-linked (GlcNAc...) (complex) asparagine glycosylation occurs at N374. S396 is modified (phosphoserine). The short motif at 443–447 is the Nuclear localization signal element; sequence RKKHR.

This sequence belongs to the clusterin family. As to quaternary structure, antiparallel disulfide-linked heterodimer of an alpha chain and a beta chain. Self-associates and forms higher oligomers. Interacts with a broad range of misfolded proteins, including APP, APOC2 and LYZ. Slightly acidic pH promotes interaction with misfolded proteins. Forms high-molecular weight oligomers upon interaction with misfolded proteins. Interacts with APOA1, LRP2, CLUAP1 and PON1. Interacts with the complement membrane attack complex. Interacts (via alpha chain) with XRCC6. Interacts with SYVN1, COMMD1, BTRC, CUL1 and with ubiquitin and SCF (SKP1-CUL1-F-box protein) E3 ubiquitin-protein ligase complexes. Interacts (via alpha chain) with BAX in stressed cells, where BAX undergoes a conformation change leading to association with the mitochondrial membrane. Does not interact with BAX in unstressed cells. Found in a complex with LTF, CLU, EPPIN and SEMG1. Interacts (immaturely glycosylated pre-secreted form) with HSPA5; this interaction promotes CLU stability and facilitates stress-induced CLU retrotranslocation from the secretory pathway to the mitochondria, thereby reducing stress-induced apoptosis by stabilizing mitochondrial membrane integrity. Interacts (isoform 4) with BCL2L1; this interaction releases and activates BAX and promotes cell death. Interacts with TGFBR2 and ACVR1. Interacts (secreted form) with STMN3; this interaction may act as an important modulator during neuronal differentiation. Interacts with VLDLR and LRP8. In terms of processing, proteolytically cleaved on its way through the secretory system, probably within the Golgi lumen. Proteolytic cleavage is not necessary for its chaperone activity. All non-secreted forms are not proteolytically cleaved. Chaperone activity of uncleaved forms is dependent on a non-reducing environment. Polyubiquitinated, leading to proteasomal degradation. Under cellular stress, the intracellular level of cleaved form is reduced due to proteasomal degradation. Post-translationally, extensively glycosylated with sulfated N-linked carbohydrates. About 30% of the protein mass is comprised of complex N-linked carbohydrate. Endoplasmic reticulum (ER) stress induces changes in glycosylation status and increases level of hypoglycosylated forms. Core carbohydrates are essential for chaperone activity. Non-secreted forms are hypoglycosylated or unglycosylated. In terms of tissue distribution, detected in blood plasma, cerebrospinal fluid, milk, seminal plasma and colon mucosa. Detected in the germinal center of colon lymphoid nodules and in colon parasympathetic ganglia of the Auerbach plexus (at protein level). Ubiquitous. Detected in brain, testis, ovary, liver and pancreas, and at lower levels in kidney, heart, spleen and lung.

Its subcellular location is the secreted. It is found in the cytoplasm. It localises to the nucleus. The protein resides in the mitochondrion membrane. The protein localises to the cytosol. Its subcellular location is the microsome. It is found in the endoplasmic reticulum. It localises to the mitochondrion. The protein resides in the perinuclear region. The protein localises to the cytoplasmic vesicle. Its subcellular location is the secretory vesicle. It is found in the chromaffin granule. Functions as extracellular chaperone that prevents aggregation of non native proteins. Prevents stress-induced aggregation of blood plasma proteins. Inhibits formation of amyloid fibrils by APP, APOC2, B2M, CALCA, CSN3, SNCA and aggregation-prone LYZ variants (in vitro). Does not require ATP. Maintains partially unfolded proteins in a state appropriate for subsequent refolding by other chaperones, such as HSPA8/HSC70. Does not refold proteins by itself. Binding to cell surface receptors triggers internalization of the chaperone-client complex and subsequent lysosomal or proteasomal degradation. Protects cells against apoptosis and against cytolysis by complement: inhibits assembly of the complement membrane attack complex (MAC) by preventing polymerization of C9 pore component of the MAC complex. Intracellular forms interact with ubiquitin and SCF (SKP1-CUL1-F-box protein) E3 ubiquitin-protein ligase complexes and promote the ubiquitination and subsequent proteasomal degradation of target proteins. Promotes proteasomal degradation of COMMD1 and IKBKB. Modulates NF-kappa-B transcriptional activity. A mitochondrial form suppresses BAX-dependent release of cytochrome c into the cytoplasm and inhibit apoptosis. Plays a role in the regulation of cell proliferation. An intracellular form suppresses stress-induced apoptosis by stabilizing mitochondrial membrane integrity through interaction with HSPA5. Secreted form does not affect caspase or BAX-mediated intrinsic apoptosis and TNF-induced NF-kappa-B-activity. Secreted form act as an important modulator during neuronal differentiation through interaction with STMN3. Plays a role in the clearance of immune complexes that arise during cell injury. Functionally, does not affect caspase or BAX-mediated intrinsic apoptosis and TNF-induced NF-kappa-B-activity. In terms of biological role, does not affect caspase or BAX-mediated intrinsic apoptosis and TNF-induced NF-kappa-B-activity. Promotes cell death through interaction with BCL2L1 that releases and activates BAX. The polypeptide is Clusterin (Homo sapiens (Human)).